We begin with the raw amino-acid sequence, 294 residues long: Elongation factor Ts (294 aa).

An involved in Mg(2+) ion dislocation from EF-Tu region spans residues 79–82 (TDFV).

Belongs to the EF-Ts family.

Its subcellular location is the cytoplasm. Its function is as follows. Associates with the EF-Tu.GDP complex and induces the exchange of GDP to GTP. It remains bound to the aminoacyl-tRNA.EF-Tu.GTP complex up to the GTP hydrolysis stage on the ribosome. In Geobacillus sp. (strain WCH70), this protein is Elongation factor Ts.